A 185-amino-acid polypeptide reads, in one-letter code: Acireductone dioxygenase (185 aa).

Residues histidine 101, histidine 103, glutamate 107, and histidine 145 each contribute to the Fe(2+) site. Histidine 101, histidine 103, glutamate 107, and histidine 145 together coordinate Ni(2+).

This sequence belongs to the acireductone dioxygenase (ARD) family. In terms of assembly, monomer. It depends on Fe(2+) as a cofactor. Requires Ni(2+) as cofactor.

The enzyme catalyses 1,2-dihydroxy-5-(methylsulfanyl)pent-1-en-3-one + O2 = 3-(methylsulfanyl)propanoate + CO + formate + 2 H(+). The catalysed reaction is 1,2-dihydroxy-5-(methylsulfanyl)pent-1-en-3-one + O2 = 4-methylsulfanyl-2-oxobutanoate + formate + 2 H(+). It functions in the pathway amino-acid biosynthesis; L-methionine biosynthesis via salvage pathway; L-methionine from S-methyl-5-thio-alpha-D-ribose 1-phosphate: step 5/6. Catalyzes 2 different reactions between oxygen and the acireductone 1,2-dihydroxy-3-keto-5-methylthiopentene (DHK-MTPene) depending upon the metal bound in the active site. Fe-containing acireductone dioxygenase (Fe-ARD) produces formate and 2-keto-4-methylthiobutyrate (KMTB), the alpha-ketoacid precursor of methionine in the methionine recycle pathway. Ni-containing acireductone dioxygenase (Ni-ARD) produces methylthiopropionate, carbon monoxide and formate, and does not lie on the methionine recycle pathway. The polypeptide is Acireductone dioxygenase (Synechococcus sp. (strain RCC307)).